A 169-amino-acid polypeptide reads, in one-letter code: Putative pre-16S rRNA nuclease (169 aa).

Basic and acidic residues predominate over residues 1-19; sequence MTDSDHRLPDRPGEGDPGR. The interval 1–22 is disordered; that stretch reads MTDSDHRLPDRPGEGDPGRGRR.

Belongs to the YqgF nuclease family.

The protein resides in the cytoplasm. Functionally, could be a nuclease involved in processing of the 5'-end of pre-16S rRNA. The chain is Putative pre-16S rRNA nuclease from Mycobacterium sp. (strain JLS).